Here is a 173-residue protein sequence, read N- to C-terminus: ATP synthase subunit b (173 aa).

The helical transmembrane segment at 15–35 (GVEWGTVIVQVLTFIVLLALL) threads the bilayer.

This sequence belongs to the ATPase B chain family. In terms of assembly, F-type ATPases have 2 components, F(1) - the catalytic core - and F(0) - the membrane proton channel. F(1) has five subunits: alpha(3), beta(3), gamma(1), delta(1), epsilon(1). F(0) has three main subunits: a(1), b(2) and c(10-14). The alpha and beta chains form an alternating ring which encloses part of the gamma chain. F(1) is attached to F(0) by a central stalk formed by the gamma and epsilon chains, while a peripheral stalk is formed by the delta and b chains.

It is found in the cell membrane. Functionally, f(1)F(0) ATP synthase produces ATP from ADP in the presence of a proton or sodium gradient. F-type ATPases consist of two structural domains, F(1) containing the extramembraneous catalytic core and F(0) containing the membrane proton channel, linked together by a central stalk and a peripheral stalk. During catalysis, ATP synthesis in the catalytic domain of F(1) is coupled via a rotary mechanism of the central stalk subunits to proton translocation. In terms of biological role, component of the F(0) channel, it forms part of the peripheral stalk, linking F(1) to F(0). This is ATP synthase subunit b from Staphylococcus aureus (strain MSSA476).